Here is a 305-residue protein sequence, read N- to C-terminus: Sulfate adenylyltransferase subunit 2 (305 aa).

This sequence belongs to the PAPS reductase family. CysD subfamily. Heterodimer composed of CysD, the smaller subunit, and CysN.

The catalysed reaction is sulfate + ATP + H(+) = adenosine 5'-phosphosulfate + diphosphate. It functions in the pathway sulfur metabolism; hydrogen sulfide biosynthesis; sulfite from sulfate: step 1/3. Functionally, with CysN forms the ATP sulfurylase (ATPS) that catalyzes the adenylation of sulfate producing adenosine 5'-phosphosulfate (APS) and diphosphate, the first enzymatic step in sulfur assimilation pathway. APS synthesis involves the formation of a high-energy phosphoric-sulfuric acid anhydride bond driven by GTP hydrolysis by CysN coupled to ATP hydrolysis by CysD. This is Sulfate adenylyltransferase subunit 2 from Stutzerimonas stutzeri (strain A1501) (Pseudomonas stutzeri).